A 236-amino-acid chain; its full sequence is MSLKYARVLLKFSGEALMGQGQFGLDSNTLRQVVLEVKALRDLGVEVGLVVGGGNIFRGAQIEGAGIQRTTGDHMGMMATVINALALRDVIEDMGMSSVVYSAMAIEGVSHGFNANHVKKGMAEGQVAIFAAGTGSPFFTTDTAAALRGIEIDADIVLKATKVDGIYTADPAKDSSAQRLAELTYDDVIQKNLQVMDMTAFVLCRDHKMPIRVFDMFKKDAVIRIVKGEDEGTLVH.

Lysine 11 to glycine 14 contacts ATP. Residue glycine 53 participates in UMP binding. Residues glycine 54 and arginine 58 each coordinate ATP. Residues aspartate 73 and threonine 134–threonine 141 each bind UMP. Residues threonine 161, tyrosine 167, and aspartate 170 each coordinate ATP.

The protein belongs to the UMP kinase family. Homohexamer.

It localises to the cytoplasm. The catalysed reaction is UMP + ATP = UDP + ADP. It functions in the pathway pyrimidine metabolism; CTP biosynthesis via de novo pathway; UDP from UMP (UMPK route): step 1/1. Inhibited by UTP. Its function is as follows. Catalyzes the reversible phosphorylation of UMP to UDP. This Hydrogenovibrio crunogenus (strain DSM 25203 / XCL-2) (Thiomicrospira crunogena) protein is Uridylate kinase.